We begin with the raw amino-acid sequence, 228 residues long: Mitochondrial assembly of ribosomal large subunit protein 1 (228 aa).

The interval 53-77 is disordered; it reads SLTRGLHHGPQPEERTAGDARLQPG.

This sequence belongs to the Iojap/RsfS family. As to quaternary structure, associates with the mitochondrial ribosome large subunit (39S) via interaction with MRPL12 and/or MRPL14. The interaction generates steric hindrance that is expected to prevent premature association of the 28S and 39S ribosomal subunits. Identified in a complex composed of MALSU1, MIEF1 upstream open reading frame protein and NDUFAB1; within the trimeric complex, MIEF1 upstream open reading frame protein functions as a bridging scaffold that interacts with MALSU1 on one side, and with NDUFAB1 on the other side. Interacts with MRPL12 and MRPL14.

The protein resides in the mitochondrion matrix. Functionally, required for normal mitochondrial ribosome function and mitochondrial translation. May play a role in ribosome biogenesis by preventing premature association of the 28S and 39S ribosomal subunits. Interacts with mitochondrial ribosomal protein uL14m (MRPL14), probably blocking formation of intersubunit bridge B8, preventing association of the 28S and 39S ribosomal subunits. Addition to isolated mitochondrial ribosomal subunits partially inhibits translation, probably by interfering with the association of the 28S and 39S ribosomal subunits and the formation of functional ribosomes. May also participate in the assembly and/or regulation of the stability of the large subunit of the mitochondrial ribosome. May function as a ribosomal silencing factor. This chain is Mitochondrial assembly of ribosomal large subunit protein 1 (Malsu1), found in Mus musculus (Mouse).